Reading from the N-terminus, the 121-residue chain is Aspartate 1-decarboxylase (121 aa).

Ser-25 (schiff-base intermediate with substrate; via pyruvic acid) is an active-site residue. Position 25 is a pyruvic acid (Ser) (Ser-25). Position 57 (Thr-57) interacts with substrate. Residue Tyr-58 is the Proton donor of the active site. Residue 73-75 (GAA) participates in substrate binding.

It belongs to the PanD family. In terms of assembly, heterooctamer of four alpha and four beta subunits. It depends on pyruvate as a cofactor. In terms of processing, is synthesized initially as an inactive proenzyme, which is activated by self-cleavage at a specific serine bond to produce a beta-subunit with a hydroxyl group at its C-terminus and an alpha-subunit with a pyruvoyl group at its N-terminus.

The protein resides in the cytoplasm. The catalysed reaction is L-aspartate + H(+) = beta-alanine + CO2. The protein operates within cofactor biosynthesis; (R)-pantothenate biosynthesis; beta-alanine from L-aspartate: step 1/1. Functionally, catalyzes the pyruvoyl-dependent decarboxylation of aspartate to produce beta-alanine. This chain is Aspartate 1-decarboxylase, found in Sulfurimonas denitrificans (strain ATCC 33889 / DSM 1251) (Thiomicrospira denitrificans (strain ATCC 33889 / DSM 1251)).